The sequence spans 769 residues: Dolichyl-phosphate-mannose--protein mannosyltransferase 2 (769 aa).

The disordered stretch occupies residues 1–44 (MSTSVEPNETEALLRKQNDLSTTASIEEKYPHQQGEAAEDDDDT). Asparagine 8 carries N-linked (GlcNAc...) asparagine glycosylation. Residues 59 to 79 (SLKQVESILAPIVFTALSFFV) form a helical membrane-spanning segment. N-linked (GlcNAc...) asparagine glycosylation is present at asparagine 132. 3 helical membrane passes run 152-169 (MRLFNATFSALCVPLAYF), 176-194 (FSMFTTWLFTLMVALESSY), and 200-218 (FILLDSMLLFFTVATVFCF). An N-linked (GlcNAc...) asparagine glycan is attached at asparagine 226. 2 consecutive transmembrane segments (helical) span residues 252-272 (VKMVGLFVTTLVGIYTVVDLW) and 288-308 (HWFARIVALILVPIFIFMLSF). N-linked (GlcNAc...) asparagine glycosylation is present at asparagine 324. The MIR 1 domain maps to 342-397 (PREVSMFHSVITLKNQGLSGGLLHSHVQTFPEGSKQQQVTTYGHKDSNNNWIFQRA). N-linked (GlcNAc...) asparagine glycans are attached at residues asparagine 408, asparagine 453, and asparagine 462. 2 consecutive MIR domains span residues 412–468 (IEYI…VEIM) and 474–534 (EDKM…IENN). 4 helical membrane-spanning segments follow: residues 615–635 (TTWTSTVGVILFAFIVLYYLI), 655–675 (FLMGGIYPMFGWGLHFLPFAI), 679–699 (VTYVHHYVPALYFAMLVFCYE), and 718–738 (LLYLAIYIGLLSLVAGTFWYF).

It belongs to the glycosyltransferase 39 family. In terms of assembly, PMT1 and PMT2 form a functional heterodimer.

Its subcellular location is the endoplasmic reticulum membrane. It carries out the reaction a di-trans,poly-cis-dolichyl beta-D-mannosyl phosphate + L-seryl-[protein] = 3-O-(alpha-D-mannosyl)-L-seryl-[protein] + a di-trans,poly-cis-dolichyl phosphate + H(+). The enzyme catalyses a di-trans,poly-cis-dolichyl beta-D-mannosyl phosphate + L-threonyl-[protein] = 3-O-(alpha-D-mannosyl)-L-threonyl-[protein] + a di-trans,poly-cis-dolichyl phosphate + H(+). The protein operates within protein modification; protein glycosylation. Protein mannosyltransferase (PMT) involved in hyphal growth and drug sensitivity. Transfers mannose from Dol-P-mannose to Ser or Thr residues on proteins. PMT1, PMT2 and PMT4 account for most of the protein-O-glycosylation activity, while PMT5 and PMT6 may specifically modulate a much narrower spectrum of target proteins. Essential protein that plays an important role in virulence. The sequence is that of Dolichyl-phosphate-mannose--protein mannosyltransferase 2 from Candida albicans (strain SC5314 / ATCC MYA-2876) (Yeast).